The following is a 320-amino-acid chain: Cytochrome f (320 aa).

Positions 1 to 32 (MKTKKSYDKVTRWVTPPILMLIIIHIITGACS) are cleaved as a signal peptide. Heme-binding residues include Tyr36, Cys56, Cys59, and His60. Residues 286–306 (IQGLLGFLASVVLAQIFLVLK) traverse the membrane as a helical segment.

This sequence belongs to the cytochrome f family. As to quaternary structure, the 4 large subunits of the cytochrome b6-f complex are cytochrome b6, subunit IV (17 kDa polypeptide, petD), cytochrome f and the Rieske protein, while the 4 small subunits are PetG, PetL, PetM and PetN. The complex functions as a dimer. Heme is required as a cofactor.

It localises to the plastid. The protein localises to the chloroplast thylakoid membrane. Its function is as follows. Component of the cytochrome b6-f complex, which mediates electron transfer between photosystem II (PSII) and photosystem I (PSI), cyclic electron flow around PSI, and state transitions. This chain is Cytochrome f, found in Gnetum parvifolium (Small-leaved jointfir).